Reading from the N-terminus, the 161-residue chain is Assembly protein P7 (161 aa).

As to quaternary structure, homodimer. Part of the packaging complex composed of RDRP, P4 and P7. Interacts with RDRP.

The protein localises to the virion. In terms of biological role, assembly protein part of the packaging complex that packages the viral RNA segments, replicate them into a double-stranded form and transcribe them. Required for efficient procapsid assembly. Necessary for stable packaging. May stabilize the RNA-dependent RNA polymerase (RdRP) in its position at the three-fold axis on the inner side of empty-unexpanded procapsids. Could play a role in viral RNA recognition. Seems to be involved in the regulation of plus strand synthesis (transcription) as a fidelity factor. This Pseudomonas phage phi6 (Bacteriophage phi-6) protein is Assembly protein P7 (P7).